Consider the following 224-residue polypeptide: Coiled-coil domain-containing protein 43 (224 aa).

Residue Lys95 forms a Glycyl lysine isopeptide (Lys-Gly) (interchain with G-Cter in SUMO1) linkage. Coiled coils occupy residues 121 to 145 (SEEE…EDEA) and 177 to 218 (RKLE…KRTQ). Over residues 138–149 (VTDEEDEADEKD) the composition is skewed to acidic residues. Disordered regions lie at residues 138–157 (VTDE…TTMN) and 176–224 (ARKL…ERKR). A Phosphothreonine modification is found at Thr139. Residues 176–211 (ARKLERDSLRDESQRKKEQDKLQRERDKLAKQERKE) show a composition bias toward basic and acidic residues. The span at 212 to 224 (KEKKRTQRGERKR) shows a compositional bias: basic residues.

The protein belongs to the CCDC43 family.

This chain is Coiled-coil domain-containing protein 43 (CCDC43), found in Homo sapiens (Human).